A 116-amino-acid polypeptide reads, in one-letter code: G antigen 2A (116 aa).

The segment at methionine 1–cysteine 116 is disordered. 2 stretches are compositionally biased toward acidic residues: residues phenylalanine 31 to glutamate 44 and glutamate 86 to glutamate 95. A compositionally biased stretch (basic and acidic residues) spans glutamate 102–cysteine 116.

The protein belongs to the GAGE family.

The polypeptide is G antigen 2A (GAGE2A) (Homo sapiens (Human)).